Here is a 620-residue protein sequence, read N- to C-terminus: Glutathione-regulated potassium-efflux system protein KefC (620 aa).

12 consecutive transmembrane segments (helical) span residues 4 to 24 (HTLV…PIAV), 26 to 46 (LGLG…LWGL), 54 to 74 (SILH…GLEL), 90 to 110 (GALQ…LLGL), 114 to 134 (VAEL…MQAM), 149 to 169 (FAVL…IPLL), 178 to 198 (MGAF…VVLL), 218 to 238 (VFSA…EEVG), 270 to 290 (GLLL…GTLI), 294 to 314 (LRIV…LWLI), 327 to 347 (WFAV…GAAQ), and 359 to 379 (SLTL…VILN). The 120-residue stretch at 399–518 (QPRVIIAGFG…AGVEKPERET (120 aa)) folds into the RCK N-terminal domain. The segment at 597–620 (GWQGTEEGKHTGNMADEPETKPSS) is disordered.

This sequence belongs to the monovalent cation:proton antiporter 2 (CPA2) transporter (TC 2.A.37) family. KefC subfamily. Homodimer. Interacts with the regulatory subunit KefF.

The protein resides in the cell inner membrane. Pore-forming subunit of a potassium efflux system that confers protection against electrophiles. Catalyzes K(+)/H(+) antiport. This chain is Glutathione-regulated potassium-efflux system protein KefC, found in Shigella flexneri serotype 5b (strain 8401).